A 359-amino-acid chain; its full sequence is MDHLRDSLLSSLPRDSPSIGAMDYARRDRESTRQSVARGDFEELRQAAFYNRTWVVTSRFCDIGAGVDSVEVHVHSLWYIYYELSRHISSQSPEHEGLVLDILRIQGMGPLNRPARGNSGVDIARTVDGTLWTDLPFLVGDMTSFWIEHGATMSGTHRLNLATFLAKLASARVAKDRMCQIALLLFRNVFETSLELRTGDESDGEDLNRGMRQLEVFHLLPAAVAWLKIAAHNLALLSEVCWSDCPSHISQGGEDFLESELGRRSPAGFSPWRYMFWMKRLHEIQGQAKEAGEKTLEELAADGIEYMSNTIQSRNSEIIRAFKSADSALHQDPHLSCLRNLAGFDDDEPEESQEIARES.

Positions 1-32 (MDHLRDSLLSSLPRDSPSIGAMDYARRDREST) are disordered. The span at 7-18 (SLLSSLPRDSPS) shows a compositional bias: low complexity.

Functionally, part of the gene cluster that mediates the biosynthesis of oxopyrrolidines, polyketide-amino acid hybrid compounds with feature structures of tetramic acid. Does not seem to play a role in oxopyrrolidines A and B biosynthesis. This chain is Oxopyrrolidines biosynthesis cluster protein G, found in Penicillium oxalicum (strain 114-2 / CGMCC 5302) (Penicillium decumbens).